Reading from the N-terminus, the 380-residue chain is Cytochrome b (380 aa).

A run of 4 helical transmembrane segments spans residues 33–53 (FGSL…FLAM), 77–98 (WLIR…YLHI), 113–133 (WNIG…GYVL), and 178–198 (FFAF…LHFF). Positions 83 and 97 each coordinate heme b. Positions 182 and 196 each coordinate heme b. Histidine 201 provides a ligand contact to a ubiquinone. Helical transmembrane passes span 226-246 (YKDL…SFFS), 288-308 (LGGV…PILH), 320-340 (LTQL…WIGG), and 347-367 (FIAV…ILIP).

It belongs to the cytochrome b family. In terms of assembly, the cytochrome bc1 complex contains 3 respiratory subunits (MT-CYB, CYC1 and UQCRFS1), 2 core proteins (UQCRC1 and UQCRC2) and probably 6 low-molecular weight proteins. Requires heme b as cofactor.

Its subcellular location is the mitochondrion inner membrane. In terms of biological role, component of the ubiquinol-cytochrome c reductase complex (complex III or cytochrome b-c1 complex) that is part of the mitochondrial respiratory chain. The b-c1 complex mediates electron transfer from ubiquinol to cytochrome c. Contributes to the generation of a proton gradient across the mitochondrial membrane that is then used for ATP synthesis. The chain is Cytochrome b (mt-cyb) from Zenopsis nebulosa (Mirror dory).